The chain runs to 126 residues: Glycine cleavage system H protein (126 aa).

The Lipoyl-binding domain occupies 22–104 (IAYVGITDYA…YGKGWLIKIK (83 aa)). Lys63 carries the N6-lipoyllysine modification.

The protein belongs to the GcvH family. The glycine cleavage system is composed of four proteins: P, T, L and H. The cofactor is (R)-lipoate.

In terms of biological role, the glycine cleavage system catalyzes the degradation of glycine. The H protein shuttles the methylamine group of glycine from the P protein to the T protein. This chain is Glycine cleavage system H protein, found in Phocaeicola vulgatus (strain ATCC 8482 / DSM 1447 / JCM 5826 / CCUG 4940 / NBRC 14291 / NCTC 11154) (Bacteroides vulgatus).